Here is a 209-residue protein sequence, read N- to C-terminus: Probable E3 ubiquitin-protein ligase NleG7 (209 aa).

Belongs to the NleG E3 ligase family. In terms of processing, two sizes of protein are detected in situ; only the smaller protein is secreted.

Its subcellular location is the secreted. The protein resides in the host cytoplasm. The catalysed reaction is S-ubiquitinyl-[E2 ubiquitin-conjugating enzyme]-L-cysteine + [acceptor protein]-L-lysine = [E2 ubiquitin-conjugating enzyme]-L-cysteine + N(6)-ubiquitinyl-[acceptor protein]-L-lysine.. Functionally, effector proteins function to alter host cell physiology and promote bacterial survival in host tissues. This protein is probably an E3 ubiquitin-protein ligase that interferes with the host's ubiquitination pathway and targets host proteins for proteasomal degradation. Mice infected with a strain of bacteria deleted for this gene were colonized less quickly by bacteria. The chain is Probable E3 ubiquitin-protein ligase NleG7 from Citrobacter rodentium.